Here is a 270-residue protein sequence, read N- to C-terminus: Small ribosomal subunit protein eS1 (270 aa).

The interval 235 to 270 (GTSKGGAASTAAVAKGEEGVKVDRPEGYEPPVLETV) is disordered. Low complexity predominate over residues 239–248 (GGAASTAAVA). The segment covering 249–261 (KGEEGVKVDRPEG) has biased composition (basic and acidic residues).

This sequence belongs to the eukaryotic ribosomal protein eS1 family. As to quaternary structure, component of the small ribosomal subunit. Mature ribosomes consist of a small (40S) and a large (60S) subunit. The 40S subunit contains about 33 different proteins and 1 molecule of RNA (18S). The 60S subunit contains about 49 different proteins and 3 molecules of RNA (28S, 5.8S and 5S).

The protein localises to the cytoplasm. This Ixodes scapularis (Black-legged tick) protein is Small ribosomal subunit protein eS1.